The sequence spans 467 residues: Inactive pancreatic lipase-related protein 1 (467 aa).

Positions 1–17 (MLIFWTITLFLLGAAKG) are cleaved as a signal peptide. 2 cysteine pairs are disulfide-bonded: C21-C27 and C109-C120. The active-site Nucleophile is the S171. The Charge relay system role is filled by D194. E205, R208, D210, and D213 together coordinate Ca(2+). The cysteines at positions 255 and 279 are disulfide-linked. The active-site Charge relay system is H281. Intrachain disulfides connect C303/C314, C317/C322, and C451/C467. Positions 356–467 (WRYGVSITLS…EDTLLTLTPC (112 aa)) constitute a PLAT domain.

Belongs to the AB hydrolase superfamily. Lipase family. Pancreas.

The protein localises to the secreted. Functionally, may function as inhibitor of dietary triglyceride digestion. Lacks detectable lipase activity towards triglycerides, diglycerides, phosphatidylcholine, galactolipids or cholesterol esters (in vitro). This is Inactive pancreatic lipase-related protein 1 (PNLIPRP1) from Homo sapiens (Human).